The primary structure comprises 752 residues: MAP/microtubule affinity-regulating kinase 4 (752 aa).

The disordered stretch occupies residues 1–36 (MSSRTALAPGNDRNSDTHGTLGSGRSSDKGPSWSSR). The Protein kinase domain maps to 59–310 (YRLLRTIGKG…LEQIMKDKWI (252 aa)). ATP is bound by residues 65–73 (IGKGNFAKV) and Lys-88. The active-site Proton acceptor is the Asp-181. Thr-214 bears the Phosphothreonine; by LKB1 mark. In terms of domain architecture, UBA spans 324–368 (EPEEDFGDTKRIEVMVGMGYTREEIKEALTNQKYNEVTATYLLLG). Positions 385–615 (ARVRAPSDTT…SGRPRPTTNL (231 aa)) are disordered. The segment covering 391 to 406 (SDTTNGTSSSKGSSHN) has biased composition (low complexity). Phosphoserine is present on residues Ser-423 and Ser-543. Residues 544–553 (PSSHSLAPPS) show a composition bias toward low complexity. The region spanning 703 to 752 (AGGPEPLSHFEVEVCQLPRPGLRGVLFRRVAGTALAFRTLVTRISNDLEL) is the KA1 domain.

This sequence belongs to the protein kinase superfamily. CAMK Ser/Thr protein kinase family. SNF1 subfamily. As to quaternary structure, interacts with MAPT/TAU. Interacts with gamma-tubulin. Interacts with ODF2. Interacts with USP9X. Interacts with YWHAQ. Interacts with NLRP3; promoting NLRP3 recruitment to microtubule organizing center (MTOC). Mg(2+) serves as cofactor. Post-translationally, ubiquitinated with 'Lys-29'- and 'Lys-33'-linked polyubiquitins which appear to impede LKB1-mediated phosphorylation. Deubiquitinated by USP9X. Phosphorylated at Thr-214 by STK11/LKB1 in complex with STE20-related adapter-alpha (STRADA) pseudo kinase and CAB39. Phosphorylated throughout the cell cycle. Isoform 1 and isoform 2 show similar expression patterns in the central nervous system and are present in the same subsets of neurons including pyramidal and non-pyramidal neurons in the cerebral cortex and hippocampus, cerebellar Purkinje cells, and interneurons and motor neurons in the spinal cord but not in glial cells (at protein level). Isoform 2 is the major isoform in brain and cerebellum. Also expressed in spleen, liver, small intestine, colon, kidney, tongue, testis and lung. Isoform 1 and isoform 2 are expressed at similar levels in heart.

Its subcellular location is the cytoplasm. It localises to the cytoskeleton. The protein resides in the microtubule organizing center. The protein localises to the centrosome. It is found in the cilium axoneme. Its subcellular location is the cilium basal body. It localises to the cell projection. The protein resides in the dendrite. It carries out the reaction L-seryl-[protein] + ATP = O-phospho-L-seryl-[protein] + ADP + H(+). It catalyses the reaction L-threonyl-[protein] + ATP = O-phospho-L-threonyl-[protein] + ADP + H(+). Activated by phosphorylation on Thr-214. Serine/threonine-protein kinase. Phosphorylates the microtubule-associated protein MAPT/TAU. Also phosphorylates the microtubule-associated proteins MAP2 and MAP4. Involved in regulation of the microtubule network, causing reorganization of microtubules into bundles. Required for the initiation of axoneme extension during cilium assembly. Regulates the centrosomal location of ODF2 and phosphorylates ODF2 in vitro. Plays a role in cell cycle progression, specifically in the G1/S checkpoint. Reduces neuronal cell survival. Plays a role in energy homeostasis by regulating satiety and metabolic rate. Promotes adipogenesis by activating JNK1 and inhibiting the p38MAPK pathway, and triggers apoptosis by activating the JNK1 pathway. Phosphorylates mTORC1 complex member RPTOR and acts as a negative regulator of the mTORC1 complex, probably due to disruption of the interaction between phosphorylated RPTOR and the RRAGA/RRAGC heterodimer which is required for mTORC1 activation. Involved in NLRP3 positioning along microtubules by mediating NLRP3 recruitment to microtubule organizing center (MTOC) upon inflammasome activation. The chain is MAP/microtubule affinity-regulating kinase 4 from Mus musculus (Mouse).